The primary structure comprises 475 residues: MNTALAQQIANEGGVEAWMIAQQHKSLLRFLTCGSVDDGKSTLIGRLLHDTRQIYEDQLSSLHNDSKRHGTQGEKLDLALLVDGLQAEREQGITIDVAYRYFSTEKRKFIIADTPGHEQYTRNMATGASTCELAILLIDARKGVLDQTRRHSFISTLLGIKHLVVAINKMDLVDYSEKTFTRIREDYLTFAGQLPGNLDIRFVPLSALEGDNVASQSESMAWYSGPTLLEVLETVEIQRVVDAQPMRFPVQYVNRPNLDFRGYAGTLASGRVEVGQRVKVLPSGVESNVARIVTFDGDREEAFAGEAITLVLTDEIDISRGDLLLAADEALPAVQSASVDVVWMAEQPLSPGQSYDIKIAGKKTRARVDGIRYQVDINNLTQREVENLPLNGIGLVDLTFDEPLVLDRYQQNPVTGGLIFIDRLSNVTVGAGMVHEPVSQATAAPSEFSAFELELNALVRRHFPHWGARDLLGDK.

One can recognise a tr-type G domain in the interval K25 to R239. The tract at residues G34–S41 is G1. G34 to S41 contacts GTP. A G2 region spans residues G92 to D96. The G3 stretch occupies residues D113–G116. GTP-binding positions include D113–H117 and N168–D171. The interval N168–D171 is G4. Residues S206 to L208 are G5.

The protein belongs to the TRAFAC class translation factor GTPase superfamily. Classic translation factor GTPase family. CysN/NodQ subfamily. In terms of assembly, heterodimer composed of CysD, the smaller subunit, and CysN.

The enzyme catalyses sulfate + ATP + H(+) = adenosine 5'-phosphosulfate + diphosphate. Its pathway is sulfur metabolism; hydrogen sulfide biosynthesis; sulfite from sulfate: step 1/3. Functionally, with CysD forms the ATP sulfurylase (ATPS) that catalyzes the adenylation of sulfate producing adenosine 5'-phosphosulfate (APS) and diphosphate, the first enzymatic step in sulfur assimilation pathway. APS synthesis involves the formation of a high-energy phosphoric-sulfuric acid anhydride bond driven by GTP hydrolysis by CysN coupled to ATP hydrolysis by CysD. The chain is Sulfate adenylyltransferase subunit 1 from Escherichia coli (strain ATCC 8739 / DSM 1576 / NBRC 3972 / NCIMB 8545 / WDCM 00012 / Crooks).